Here is a 168-residue protein sequence, read N- to C-terminus: Putative gustatory receptor clone PTE03 (168 aa).

At 1-25 (TTVPKMLINLQKQNKAISYAGCITQ) the chain is on the extracellular side. C22 and C104 are disulfide-bonded. A helical transmembrane segment spans residues 26–45 (LSFVLLFAGMENFLLAAMAY). At 46–67 (DRYVAICKPLRYTAIMKAHLCL) the chain is on the cytoplasmic side. A helical membrane pass occupies residues 68-88 (VMTLLSLCISIVDALLHGLMI). At 89–121 (LRLSFCTFLEIPHYFCELYQVIKLSCSDTLINN) the chain is on the extracellular side. A helical transmembrane segment spans residues 122–143 (ILVYTMTSTLGGVPLGGIIFSY). The Cytoplasmic portion of the chain corresponds to 144 to 165 (FKIISSILRMPSSGSRHRAFST). Residues 166-168 (CGS) traverse the membrane as a helical segment.

Belongs to the G-protein coupled receptor 1 family. In terms of tissue distribution, tongue specific.

It is found in the cell membrane. In terms of biological role, possible taste receptor. This is Putative gustatory receptor clone PTE03 (Olr1145) from Rattus norvegicus (Rat).